Reading from the N-terminus, the 428-residue chain is Histidine--tRNA ligase (428 aa).

It belongs to the class-II aminoacyl-tRNA synthetase family. As to quaternary structure, homodimer.

The protein resides in the cytoplasm. It carries out the reaction tRNA(His) + L-histidine + ATP = L-histidyl-tRNA(His) + AMP + diphosphate + H(+). The sequence is that of Histidine--tRNA ligase from Chlamydia trachomatis serovar L2 (strain ATCC VR-902B / DSM 19102 / 434/Bu).